A 476-amino-acid chain; its full sequence is Ribulose bisphosphate carboxylase large chain (476 aa).

The propeptide occupies 1–2 (MS). Pro3 is modified (N-acetylproline). Lys14 is subject to N6,N6,N6-trimethyllysine. Substrate is bound by residues Asn123 and Thr173. Catalysis depends on Lys175, which acts as the Proton acceptor. Lys177 contributes to the substrate binding site. The Mg(2+) site is built by Lys201, Asp203, and Glu204. Lys201 is subject to N6-carboxylysine. The active-site Proton acceptor is His294. 3 residues coordinate substrate: Arg295, His327, and Ser379.

Belongs to the RuBisCO large chain family. Type I subfamily. Heterohexadecamer of 8 large chains and 8 small chains; disulfide-linked. The disulfide link is formed within the large subunit homodimers. Mg(2+) serves as cofactor. In terms of processing, the disulfide bond which can form in the large chain dimeric partners within the hexadecamer appears to be associated with oxidative stress and protein turnover.

The protein localises to the plastid. It localises to the chloroplast. It catalyses the reaction 2 (2R)-3-phosphoglycerate + 2 H(+) = D-ribulose 1,5-bisphosphate + CO2 + H2O. The catalysed reaction is D-ribulose 1,5-bisphosphate + O2 = 2-phosphoglycolate + (2R)-3-phosphoglycerate + 2 H(+). Its function is as follows. RuBisCO catalyzes two reactions: the carboxylation of D-ribulose 1,5-bisphosphate, the primary event in carbon dioxide fixation, as well as the oxidative fragmentation of the pentose substrate in the photorespiration process. Both reactions occur simultaneously and in competition at the same active site. The chain is Ribulose bisphosphate carboxylase large chain from Liriodendron tulipifera (Tuliptree).